A 559-amino-acid polypeptide reads, in one-letter code: 5'-AMP-activated protein kinase catalytic subunit alpha-1 (559 aa).

Residues 27 to 279 (YILGDTLGVG…IKDIREHEWF (253 aa)) enclose the Protein kinase domain. A Phosphothreonine modification is found at T32. ATP is bound by residues 33 to 41 (LGVGTFGKV) and K56. The active-site Proton acceptor is the D150. A Phosphothreonine; by LKB1 and CaMKK2 modification is found at T183. A phosphothreonine mark is found at T269 and T355. Residues 302–381 (EALKEVCEKF…PERVPFLVAE (80 aa)) form an AIS region. S356 carries the phosphoserine modification. S360 bears the Phosphoserine; by ULK1 mark. T368 bears the Phosphothreonine; by ULK1 mark. Residue T382 is modified to Phosphothreonine. S397 carries the phosphoserine; by ULK1 modification. 2 positions are modified to phosphoserine: S467 and S486. The disordered stretch occupies residues 484–536 (AKSGTATPQRSGSISNYRSCQRSDSDAEAQGKPSEVSLTSSVTSLDSSPVDVA). A compositionally biased stretch (polar residues) spans 485 to 505 (KSGTATPQRSGSISNYRSCQR). Residue S486 is modified to Phosphoserine; by ULK1. T488 is subject to Phosphothreonine; by ULK1. T490 carries the post-translational modification Phosphothreonine. Phosphoserine is present on residues S496, S508, S524, and S527. A compositionally biased stretch (low complexity) spans 516–535 (PSEVSLTSSVTSLDSSPVDV).

It belongs to the protein kinase superfamily. CAMK Ser/Thr protein kinase family. SNF1 subfamily. As to quaternary structure, AMPK is a heterotrimer of an alpha catalytic subunit (PRKAA1 or PRKAA2), a beta (PRKAB1 or PRKAB2) and a gamma non-catalytic subunits (PRKAG1, PRKAG2 or PRKAG3). Interacts with FNIP1 and FNIP2. Mg(2+) is required as a cofactor. In terms of processing, ubiquitinated. Post-translationally, phosphorylated at Thr-183 by STK11/LKB1 in complex with STE20-related adapter-alpha (STRADA) pseudo kinase and CAB39. Also phosphorylated at Thr-183 by CAMKK2; triggered by a rise in intracellular calcium ions, without detectable changes in the AMP/ATP ratio. CAMKK1 can also phosphorylate Thr-183, but at a much lower level. Dephosphorylated by protein phosphatase 2A and 2C (PP2A and PP2C). Phosphorylated by ULK1 and ULK2; leading to negatively regulate AMPK activity and suggesting the existence of a regulatory feedback loop between ULK1, ULK2 and AMPK. There is some ambiguity for some phosphosites: Ser-360/Thr-368 and Ser-486/Thr-488. Dephosphorylated by PPM1A and PPM1B. Glycosylated; O-GlcNAcylated by OGT, promoting the AMP-activated protein kinase (AMPK) activity. Low expression in kidney, liver, lung, heart and brain.

The protein resides in the cytoplasm. It is found in the nucleus. The catalysed reaction is L-seryl-[protein] + ATP = O-phospho-L-seryl-[protein] + ADP + H(+). The enzyme catalyses L-threonyl-[protein] + ATP = O-phospho-L-threonyl-[protein] + ADP + H(+). It catalyses the reaction L-seryl-[acetyl-CoA carboxylase] + ATP = O-phospho-L-seryl-[acetyl-CoA carboxylase] + ADP + H(+). It carries out the reaction L-seryl-[3-hydroxy-3-methylglutaryl-coenzyme A reductase] + ATP = O-phospho-L-seryl-[3-hydroxy-3-methylglutaryl-coenzyme A reductase] + ADP + H(+). The catalysed reaction is L-seryl-[tau protein] + ATP = O-phospho-L-seryl-[tau protein] + ADP + H(+). The enzyme catalyses L-threonyl-[tau protein] + ATP = O-phospho-L-threonyl-[tau protein] + ADP + H(+). Activated by phosphorylation on Thr-183. Binding of AMP to non-catalytic gamma subunit (PRKAG1, PRKAG2 or PRKAG3) results in allosteric activation, inducing phosphorylation on Thr-183. AMP-binding to gamma subunit also sustains activity by preventing dephosphorylation of Thr-183. ADP also stimulates Thr-183 phosphorylation, without stimulating already phosphorylated AMPK. ATP promotes dephosphorylation of Thr-183, rendering the enzyme inactive. Under physiological conditions AMPK mainly exists in its inactive form in complex with ATP, which is much more abundant than AMP. Selectively inhibited by compound C (6-[4-(2-Piperidin-1-yl-ethoxy)-phenyl)]-3-pyridin-4-yl-pyyrazolo[1,5-a] pyrimidine. Activated by resveratrol, a natural polyphenol present in red wine, and S17834, a synthetic polyphenol. Functionally, catalytic subunit of AMP-activated protein kinase (AMPK), an energy sensor protein kinase that plays a key role in regulating cellular energy metabolism. In response to reduction of intracellular ATP levels, AMPK activates energy-producing pathways and inhibits energy-consuming processes: inhibits protein, carbohydrate and lipid biosynthesis, as well as cell growth and proliferation. AMPK acts via direct phosphorylation of metabolic enzymes, and by longer-term effects via phosphorylation of transcription regulators. Regulates lipid synthesis by phosphorylating and inactivating lipid metabolic enzymes such as ACACA, ACACB, GYS1, HMGCR and LIPE; regulates fatty acid and cholesterol synthesis by phosphorylating acetyl-CoA carboxylase (ACACA and ACACB) and hormone-sensitive lipase (LIPE) enzymes, respectively. Promotes lipolysis of lipid droplets by mediating phosphorylation of isoform 1 of CHKA (CHKalpha2). Regulates insulin-signaling and glycolysis by phosphorylating IRS1, PFKFB2 and PFKFB3. AMPK stimulates glucose uptake in muscle by increasing the translocation of the glucose transporter SLC2A4/GLUT4 to the plasma membrane, possibly by mediating phosphorylation of TBC1D4/AS160. Regulates transcription and chromatin structure by phosphorylating transcription regulators involved in energy metabolism such as CRTC2/TORC2, FOXO3, histone H2B, HDAC5, MEF2C, MLXIPL/ChREBP, EP300, HNF4A, p53/TP53, SREBF1, SREBF2 and PPARGC1A. Acts as a key regulator of glucose homeostasis in liver by phosphorylating CRTC2/TORC2, leading to CRTC2/TORC2 sequestration in the cytoplasm. In response to stress, phosphorylates 'Ser-36' of histone H2B (H2BS36ph), leading to promote transcription. Acts as a key regulator of cell growth and proliferation by phosphorylating FNIP1, TSC2, RPTOR, WDR24 and ATG1/ULK1: in response to nutrient limitation, negatively regulates the mTORC1 complex by phosphorylating RPTOR component of the mTORC1 complex and by phosphorylating and activating TSC2. Also phosphorylates and inhibits GATOR2 subunit WDR24 in response to nutrient limitation, leading to suppress glucose-mediated mTORC1 activation. In response to energetic stress, phosphorylates FNIP1, inactivating the non-canonical mTORC1 signaling, thereby promoting nuclear translocation of TFEB and TFE3, and inducing transcription of lysosomal or autophagy genes. In response to nutrient limitation, promotes autophagy by phosphorylating and activating ATG1/ULK1. In that process, it also activates WDR45/WIPI4. Phosphorylates CASP6, thereby preventing its autoprocessing and subsequent activation. In response to nutrient limitation, phosphorylates transcription factor FOXO3 promoting FOXO3 mitochondrial import. Also acts as a regulator of cellular polarity by remodeling the actin cytoskeleton; probably by indirectly activating myosin. AMPK also acts as a regulator of circadian rhythm by mediating phosphorylation of CRY1, leading to destabilize it. May regulate the Wnt signaling pathway by phosphorylating CTNNB1, leading to stabilize it. Also has tau-protein kinase activity: in response to amyloid beta A4 protein (APP) exposure, activated by CAMKK2, leading to phosphorylation of MAPT/TAU; however the relevance of such data remains unclear in vivo. Also phosphorylates CFTR, EEF2K, KLC1, NOS3 and SLC12A1. Regulates hepatic lipogenesis. Activated via SIRT3, represses sterol regulatory element-binding protein (SREBP) transcriptional activities and ATP-consuming lipogenesis to restore cellular energy balance. Upon stress, regulates mitochondrial fragmentation through phosphorylation of MTFR1L. This Rattus norvegicus (Rat) protein is 5'-AMP-activated protein kinase catalytic subunit alpha-1 (Prkaa1).